We begin with the raw amino-acid sequence, 229 residues long: Peptidase E (229 aa).

Residues serine 120, aspartate 135, and histidine 157 each act as charge relay system in the active site.

The protein belongs to the peptidase S51 family.

It localises to the cytoplasm. It catalyses the reaction Dipeptidase E catalyzes the hydrolysis of dipeptides Asp-|-Xaa. It does not act on peptides with N-terminal Glu, Asn or Gln, nor does it cleave isoaspartyl peptides.. Hydrolyzes dipeptides containing N-terminal aspartate residues. May play a role in allowing the cell to use peptide aspartate to spare carbon otherwise required for the synthesis of the aspartate family of amino acids. This is Peptidase E (pepE) from Salmonella typhimurium (strain LT2 / SGSC1412 / ATCC 700720).